Reading from the N-terminus, the 1798-residue chain is Laminin subunit beta-2 (1798 aa).

An N-terminal signal peptide occupies residues 1–32 (MELTSRERGRGQPLPWELRLGLLLSVLAATLA). Residues 43 to 282 (SRGSCYPATG…ALYELVVRGN (240 aa)) enclose the Laminin N-terminal domain. N-linked (GlcNAc...) asparagine glycosylation is present at asparagine 248. 19 disulfide bridges follow: cysteine 283/cysteine 292, cysteine 285/cysteine 310, cysteine 312/cysteine 321, cysteine 324/cysteine 344, cysteine 347/cysteine 356, cysteine 349/cysteine 374, cysteine 377/cysteine 386, cysteine 389/cysteine 407, cysteine 410/cysteine 423, cysteine 412/cysteine 438, cysteine 440/cysteine 449, cysteine 452/cysteine 467, cysteine 470/cysteine 484, cysteine 472/cysteine 491, cysteine 493/cysteine 502, cysteine 505/cysteine 519, cysteine 522/cysteine 534, cysteine 524/cysteine 541, and cysteine 543/cysteine 552. 4 Laminin EGF-like domains span residues 283–346 (CFCY…ACRK), 347–409 (CECH…VCRS), 410–469 (CDCD…GCRR), and 470–521 (CQCN…GCRP). N-linked (GlcNAc...) asparagine glycosylation is present at asparagine 368. Residues 522–552 (CDCDVGGALDPQCDEGTGQCHCRQHMVGRRC) enclose the Laminin EGF-like 5; truncated domain. The 217-residue stretch at 561-777 (RPFLDHLIWE…LLISLSTLIY (217 aa)) folds into the Laminin IV type B domain. 32 cysteine pairs are disulfide-bonded: cysteine 783/cysteine 795, cysteine 785/cysteine 802, cysteine 804/cysteine 813, cysteine 816/cysteine 828, cysteine 831/cysteine 843, cysteine 833/cysteine 850, cysteine 852/cysteine 861, cysteine 864/cysteine 874, cysteine 877/cysteine 886, cysteine 879/cysteine 893, cysteine 896/cysteine 905, cysteine 908/cysteine 924, cysteine 927/cysteine 943, cysteine 929/cysteine 954, cysteine 956/cysteine 965, cysteine 968/cysteine 983, cysteine 986/cysteine 1000, cysteine 988/cysteine 1007, cysteine 1010/cysteine 1019, cysteine 1022/cysteine 1035, cysteine 1038/cysteine 1058, cysteine 1040/cysteine 1065, cysteine 1067/cysteine 1076, cysteine 1079/cysteine 1092, cysteine 1095/cysteine 1107, cysteine 1097/cysteine 1114, cysteine 1116/cysteine 1125, cysteine 1128/cysteine 1140, cysteine 1143/cysteine 1155, cysteine 1145/cysteine 1162, cysteine 1164/cysteine 1173, and cysteine 1176/cysteine 1187. 8 consecutive Laminin EGF-like domains span residues 783 to 830 (CQCN…GCQA), 831 to 876 (CQCS…SCRP), 877 to 926 (CVCN…QCRP), 927 to 985 (CPCP…RCQL), 986 to 1037 (CECS…SCHR), 1038 to 1094 (CTCN…GCQP), 1095 to 1142 (CACH…QCHA), and 1143 to 1189 (CDCD…ACHP). Asparagine 1085 carries an N-linked (GlcNAc...) asparagine glycan. The tract at residues 1190–1409 (CHACFGDWDR…LSLTDINELV (220 aa)) is domain II. 3 N-linked (GlcNAc...) asparagine glycosylation sites follow: asparagine 1249, asparagine 1308, and asparagine 1348. Positions 1253-1319 (ASTAQLVEAT…TLRQLDQHLD (67 aa)) form a coiled coil. A disordered region spans residues 1338–1364 (SQSAEAERRANTSALAVPSPVSNSASA). Residues 1350 to 1363 (SALAVPSPVSNSAS) are compositionally biased toward low complexity. A domain alpha region spans residues 1410 to 1442 (CGAPGDAPCATSPCGGAGCRDEDGQPRCGGLSC). The interval 1443 to 1798 (NGAAATADLA…LQVQIYNTCQ (356 aa)) is domain I. Residues 1472-1526 (SILSRVAETRRQASEAQQRAQAALDKANASRGQVEQANQELQELIQSVKDFLNQE) adopt a coiled-coil conformation. An N-linked (GlcNAc...) asparagine glycan is attached at asparagine 1499. Serine 1532 carries the post-translational modification Phosphoserine; by FAM20C. Residues 1577 to 1790 (VGDVRRAEQL…RSVLQAINLQ (214 aa)) adopt a coiled-coil conformation.

In terms of assembly, laminin is a complex glycoprotein, consisting of three different polypeptide chains (alpha, beta, gamma), which are bound to each other by disulfide bonds into a cross-shaped molecule comprising one long and three short arms with globules at each end. Beta-2 is a subunit of laminin-3 (laminin-121 or S-laminin), laminin-4 (laminin-221 or S-merosin), laminin-7 (laminin-321 or KS-laminin), laminin-9 (laminin-421), laminin-11 (laminin-521), laminin-14 (laminin-423) and laminin-15 (laminin-523).

The protein localises to the secreted. It localises to the extracellular space. Its subcellular location is the extracellular matrix. The protein resides in the basement membrane. Functionally, binding to cells via a high affinity receptor, laminin is thought to mediate the attachment, migration and organization of cells into tissues during embryonic development by interacting with other extracellular matrix components. This Homo sapiens (Human) protein is Laminin subunit beta-2 (LAMB2).